Here is a 524-residue protein sequence, read N- to C-terminus: Apoptosis inhibitor 5-A (524 aa).

Residues 1-360 (MATVEELYRS…HQLGRKLPDF (360 aa)) form an ARM-like and Heat-like helical repeats region. Positions 440 to 524 (TLSWKPVQRT…RGNRSRGRIY (85 aa)) are disordered. The Nuclear localization signal motif lies at 455 to 476 (KRTSDETSSTSPPKKPIVGPKR). The segment covering 503 to 516 (GFQGGRGRGWGGRG) has biased composition (gly residues).

Belongs to the API5 family. In terms of assembly, monomer.

The protein resides in the nucleus. May be an antiapoptotic factor. This is Apoptosis inhibitor 5-A (api5-a) from Xenopus laevis (African clawed frog).